Consider the following 678-residue polypeptide: Catalase (678 aa).

The segment covering 1–26 has biased composition (basic and acidic residues); that stretch reads MSNEREMQNKKDQQLESFRVEDEGKK. The interval 1–32 is disordered; the sequence is MSNEREMQNKKDQQLESFRVEDEGKKLTTNQG. Catalysis depends on residues His75 and Asn148. Tyr362 provides a ligand contact to heme.

This sequence belongs to the catalase family. HPII subfamily. Requires heme as cofactor.

The protein resides in the cytoplasm. It catalyses the reaction 2 H2O2 = O2 + 2 H2O. In terms of biological role, decomposes hydrogen peroxide into water and oxygen; serves to protect cells from the toxic effects of hydrogen peroxide. The polypeptide is Catalase (katE) (Alkalihalophilus pseudofirmus (strain ATCC BAA-2126 / JCM 17055 / OF4) (Bacillus pseudofirmus)).